Consider the following 337-residue polypeptide: Prenyltransferase terC (337 aa).

Mg(2+) contacts are provided by Asp-111 and Asp-115.

The protein belongs to the FPP/GGPP synthase family. Mg(2+) is required as a cofactor.

It participates in secondary metabolite biosynthesis. Its function is as follows. Prenyltransferase; part of the gene cluster that mediates the biosynthesis of terpendoles, indole-diterpene (IDT) mycotoxins including terpendole I, terpendole K, terpendole C, as well as the kinesin Eg5 inhibitor terpendole E. Terpendoles biosynthesis begins with the synthesis of geranylgeranyl diphosphate (GGPP) by a yet unidentified GGPP synthase. Condensation of indole-3-glycerol phosphate with GGPP by the prenyltransferase terC then forms 3-geranylgeranylindole (3-GGI), followed by epoxidation and cyclization of this intermediate (by the FAD-dependent monooxygeanse terM and the terpene cyclase terB) to form paspaline. The cytochrome monooxygenase terQ then hydroxylates paspalline at C-11 to yield terpendole E. The cytochrome monooxygenase terP converts terpendole E to 13-desoxyterpendole I, and terQ converts 13-desoxyterpendole I into terpendole I. TerF and terK are required for conversion of terpendole I to terpendole C which is further converted to terpendole K. The sequence is that of Prenyltransferase terC from Tolypocladium album (Soil fungus).